The chain runs to 1544 residues: Zinc finger protein GLI2 (1544 aa).

The disordered stretch occupies residues 1–26 (METSAPAPALEKKEAKSGLLEDSSFP). 4 positions are modified to phosphoserine: Ser-145, Ser-230, Ser-232, and Ser-238. Residues 338–364 (SSSSSNCLNDANQNKQNSESAVSSTVN) are disordered. Position 385 is a phosphoserine; by DYRK2 (Ser-385). A C2H2-type 1 zinc finger spans residues 417–444 (TNCHWADCTKEYDTQEQLVHHINNEHIH). A C2H2-type 2; degenerate zinc finger spans residues 455-477 (QACTREQKPFKAQYMLVVHMRRH). C2H2-type zinc fingers lie at residues 483–507 (HKCT…LRSH), 513–538 (YVCE…NRTH), and 544–569 (YICK…KTVH). Disordered regions lie at residues 557–619 (DPSS…TSHT) and 635–682 (GLCQ…ALAD). Residues 569–585 (HGPDAHVTKKQRNDVHV) are compositionally biased toward basic and acidic residues. Residues 637-657 (CQSSPGAQSSCSSEPSPLGSA) are compositionally biased toward low complexity. Residue Ser-707 is modified to Phosphoserine. Thr-708 carries the phosphothreonine modification. The residue at position 740 (Lys-740) is an N6-acetyllysine; by EP300. Disordered stretches follow at residues 781 to 800 (SQLQ…AYTV), 805 to 861 (SGIS…PGLL), 908 to 963 (ALPG…RRPD), 995 to 1016 (VQSH…RPPS), 1166 to 1220 (FGQY…CLGM), and 1422 to 1457 (GGCP…VSST). Composition is skewed to polar residues over residues 790 to 800 (STSTMSSAYTV) and 805 to 814 (SGISPYFSSR). Basic and acidic residues predominate over residues 954 to 963 (RASDPVRRPD). Ser-997 is subject to Phosphoserine; by DYRK2. 3 stretches are compositionally biased toward polar residues: residues 997 to 1009 (SHPS…TRNA), 1173 to 1190 (NPQS…TQPH), and 1200 to 1209 (SRGSYTQQPR).

This sequence belongs to the GLI C2H2-type zinc-finger protein family. In terms of assembly, interacts with ZIC1 and ZIC2. Interacts with STK36. Interacts with SUFU; this inhibits transcriptional activation mediated by GLI2. Interacts (via C-terminal internal region) with FOXC1 (via N-terminus); this interaction is direct and increases GLI2 DNA-binding and transcriptional activity through a smoothened (SMO)-independent Hedgehog (Hh) signaling pathway. Post-translationally, phosphorylated in vitro by ULK3. Phosphorylated by DYRK2; this inhibits GLI2 transcription factor activity and promotes proteasomal degradation of GLI2. In terms of processing, acetylation at Lys-740 inhibits Hh target gene expression, probably by impeding entry into chromatin thus preventing promoter occupancy.

The protein resides in the nucleus. Its subcellular location is the cytoplasm. The protein localises to the cell projection. It is found in the cilium. In terms of biological role, functions as a transcription regulator in the hedgehog (Hh) pathway. Functions as a transcriptional activator. May also function as transcriptional repressor. Requires STK36 for full transcriptional activator activity. Binds to the DNA sequence 5'-GAACCACCCA-3' which is part of the TRE-2S regulatory element. Is involved in the smoothened (SHH) signaling pathway. Required for normal skeleton development. The protein is Zinc finger protein GLI2 of Mus musculus (Mouse).